The chain runs to 316 residues: GTP cyclohydrolase FolE2 1 (316 aa).

The protein belongs to the GTP cyclohydrolase IV family.

The enzyme catalyses GTP + H2O = 7,8-dihydroneopterin 3'-triphosphate + formate + H(+). The protein operates within cofactor biosynthesis; 7,8-dihydroneopterin triphosphate biosynthesis; 7,8-dihydroneopterin triphosphate from GTP: step 1/1. In terms of biological role, converts GTP to 7,8-dihydroneopterin triphosphate. This Burkholderia lata (strain ATCC 17760 / DSM 23089 / LMG 22485 / NCIMB 9086 / R18194 / 383) protein is GTP cyclohydrolase FolE2 1.